Consider the following 150-residue polypeptide: Transcriptional repressor NrdR (150 aa).

A zinc finger lies at 3 to 34 (CPFCGYEDTFVIDTREIEDQRVIRRRRECPNC). An ATP-cone domain is found at 49–139 (IMVIKKDGRR…VYQEFSSLEE (91 aa)).

Belongs to the NrdR family. Zn(2+) is required as a cofactor.

Its function is as follows. Negatively regulates transcription of bacterial ribonucleotide reductase nrd genes and operons by binding to NrdR-boxes. The sequence is that of Transcriptional repressor NrdR from Dictyoglomus thermophilum (strain ATCC 35947 / DSM 3960 / H-6-12).